Here is a 708-residue protein sequence, read N- to C-terminus: F-box protein MAX2 homolog A (708 aa).

Positions 2 to 49 constitute an F-box domain; sequence ATQLNDLPDVILSNIIAAVTDVRSRNSTSFVCRKWLVLERSTRVSLTL.

Part of a putative SCF (SKP1/Cullin/F-box) ubiquitin ligase complex. Interacts with DAD2. Interacts with KAI2IA in the presence of (-)-germacrene D. Mainly expressed in fully expanded leaves, lateral roots, axillary and shoot apex, and, to a lower extent, in internodes and nodes.

The protein localises to the nucleus. Functionally, component of SCF(ASK-cullin-F-box) E3 ubiquitin ligase complexes, which may mediate the ubiquitination and subsequent proteasomal degradation of target proteins. Is necessary for responses to strigolactones and may be involved in the ubiquitin-mediated degradation of specific proteins that activate axillary growth. Targets probably SMAX1A to degradation upon the formation of an E3 SCF ubiquitin ligase complex (ASK-cullin-F-box) containing MAX2A and KAI2IA in response to (-)-germacrene D in the stigma. The chain is F-box protein MAX2 homolog A from Petunia hybrida (Petunia).